The chain runs to 276 residues: 4-chlorobenzoyl coenzyme A dehalogenase-1 (276 aa).

A substrate-binding site is contributed by 66–71 (AGFDLE). Residue H93 is the Proton acceptor of the active site. Residue G117 participates in substrate binding. The active-site Nucleophile is D148. Position 261 (R261) interacts with substrate.

The protein belongs to the enoyl-CoA hydratase/isomerase family. In terms of assembly, homotetramer.

The enzyme catalyses 4-chlorobenzoyl-CoA + H2O = 4-hydroxybenzoyl-CoA + chloride + H(+). Its pathway is xenobiotic degradation; 4-chlorobenzoate degradation; 4-hydroxybenzoate from 4-chlorobenzoate: step 2/3. Dehalogenates 4-chlorobenzoyl-CoA, 4-iodobenzoyl-CoA, 4-bromobenzoyl-CoA and, at a slower rate, 4-fluorobenzoyl-CoA. Does not dehalogenate 2-chlorobenzoyl-CoA or 3-chlorobenzoyl-CoA. This is 4-chlorobenzoyl coenzyme A dehalogenase-1 from Arthrobacter sp.